The chain runs to 116 residues: Distal membrane-arm assembly complex protein 1 (116 aa).

Residues 1–39 (MGSRLSQPFESYITAPPGTAAAPAKPAPPATPGAPTSPA) form a disordered region. The segment covering 14–24 (TAPPGTAAAPA) has biased composition (low complexity). 2 helical membrane passes run 52-69 (VLSG…YWVA) and 82-104 (WTIT…GIVV).

In terms of assembly, interacts with incompletely assembled mitochondrial NADH:ubiquinone oxidoreductase complex (complex I).

It is found in the mitochondrion inner membrane. Its function is as follows. Required for the assembly of the mitochondrial NADH:ubiquinone oxidoreductase complex (complex I). Involved in the assembly of the distal region of complex I. This chain is Distal membrane-arm assembly complex protein 1, found in Homo sapiens (Human).